The chain runs to 417 residues: Phosphoglycerate kinase 2 (417 aa).

S4 is modified (phosphoserine). K11 carries the post-translational modification N6-acetyllysine. (2R)-3-phosphoglycerate contacts are provided by V23, D24, F25, N26, Q38, and R39. K48 is modified (N6-acetyllysine). Positions 62, 63, 65, and 66 each coordinate (2R)-3-phosphoglycerate. N6-acetyllysine occurs at positions 75, 86, and 97. (2R)-3-phosphoglycerate contacts are provided by L122 and R123. N6-acetyllysine occurs at positions 131 and 146. Positions 170 and 171 each coordinate (2R)-3-phosphoglycerate. Y196 is subject to Phosphotyrosine. An N6-acetyllysine modification is found at K199. G214 is an ADP binding site. A CDP-binding site is contributed by G214. 2 residues coordinate AMP: A215 and K216. A215 contacts ATP. A215 contributes to the Mg(2+) binding site. D219 is a binding site for CDP. Residue D219 participates in Mg(2+) binding. An AMP-binding site is contributed by K220. K220 serves as a coordination point for ATP. Position 238 (G238) interacts with ADP. G238 is a CDP binding site. AMP is bound at residue G239. ATP is bound at residue G239. Residues K267 and K291 each carry the N6-acetyllysine modification. Position 313 (G313) interacts with AMP. G313 is an ATP binding site. 3 residues coordinate CDP: G338, I340, and F343. An ADP-binding site is contributed by F343. E344 is an AMP binding site. Residues E344, D375, and T376 each coordinate ATP. A Mg(2+)-binding site is contributed by D375.

The protein belongs to the phosphoglycerate kinase family. In terms of assembly, monomer. Mg(2+) is required as a cofactor. As to expression, testis and sperm. Localized on the principle piece in the sperm (at protein level). Testis-specific.

The protein resides in the cytoplasm. It carries out the reaction (2R)-3-phosphoglycerate + ATP = (2R)-3-phospho-glyceroyl phosphate + ADP. It participates in carbohydrate degradation; glycolysis; pyruvate from D-glyceraldehyde 3-phosphate: step 2/5. In terms of biological role, essential for sperm motility and male fertility but is not required for the completion of spermatogenesis. This Mus musculus (Mouse) protein is Phosphoglycerate kinase 2 (Pgk2).